A 315-amino-acid chain; its full sequence is Gamma-hemolysin component C (315 aa).

The N-terminal stretch at 1–29 is a signal peptide; that stretch reads MLKNKILATTLSVSLLAPLANPLLENAKA.

The protein belongs to the aerolysin family. Toxicity requires sequential binding and synergistic association of a class S and a class F component which form heterooligomeric complexes. HlgC (class S) associates with HlgB (class F) thus forming an CB toxin.

Functionally, toxin that seems to act by forming pores in the membrane of the cell. Has a hemolytic and a leucotoxic activity. The protein is Gamma-hemolysin component C (hlgC) of Staphylococcus aureus (strain Mu50 / ATCC 700699).